The primary structure comprises 328 residues: UPF0285 protein MJ1370 (328 aa).

This sequence belongs to the UPF0285 family.

This is UPF0285 protein MJ1370 from Methanocaldococcus jannaschii (strain ATCC 43067 / DSM 2661 / JAL-1 / JCM 10045 / NBRC 100440) (Methanococcus jannaschii).